The chain runs to 513 residues: ATP synthase subunit alpha (513 aa).

Residue 169–176 participates in ATP binding; the sequence is GDRQTGKT.

It belongs to the ATPase alpha/beta chains family. F-type ATPases have 2 components, CF(1) - the catalytic core - and CF(0) - the membrane proton channel. CF(1) has five subunits: alpha(3), beta(3), gamma(1), delta(1), epsilon(1). CF(0) has three main subunits: a(1), b(2) and c(9-12). The alpha and beta chains form an alternating ring which encloses part of the gamma chain. CF(1) is attached to CF(0) by a central stalk formed by the gamma and epsilon chains, while a peripheral stalk is formed by the delta and b chains.

It localises to the cell inner membrane. It catalyses the reaction ATP + H2O + 4 H(+)(in) = ADP + phosphate + 5 H(+)(out). Functionally, produces ATP from ADP in the presence of a proton gradient across the membrane. The alpha chain is a regulatory subunit. The protein is ATP synthase subunit alpha of Escherichia coli O81 (strain ED1a).